Reading from the N-terminus, the 216-residue chain is MSSLVTPQHAEELSTGARQLGVELTAEQHEKLLGYLALLIKWNKAYNLTAVRDPDEMVSRHLLDSLSVMSFIHNDRDNWLDVGSGGGMPGIPLAILHPHKRVTVLDANGKKTRFLTQVKMELKLDNLTVIHSRVEAFQPAQPFDGIISRAFSSMENFTNWTRHLGDTGTQWLAMKGLHPADELVALPADFTVESEQALTVPGCQGQRHLLILRRKA.

Residues glycine 83, methionine 88, 134-135 (VE), and arginine 149 contribute to the S-adenosyl-L-methionine site.

The protein belongs to the methyltransferase superfamily. RNA methyltransferase RsmG family.

Its subcellular location is the cytoplasm. It catalyses the reaction guanosine(527) in 16S rRNA + S-adenosyl-L-methionine = N(7)-methylguanosine(527) in 16S rRNA + S-adenosyl-L-homocysteine. Specifically methylates the N7 position of guanine in position 527 of 16S rRNA. The protein is Ribosomal RNA small subunit methyltransferase G of Pseudomonas putida (strain ATCC 700007 / DSM 6899 / JCM 31910 / BCRC 17059 / LMG 24140 / F1).